The following is a 368-amino-acid chain: C-X-C chemokine receptor type 3 (368 aa).

Over 1 to 53 (MVLEVSDHQVLNDAEVAALLENFSSSYDYGENESDSCCTSPPCPQDFSLNFDR) the chain is Extracellular. N-linked (GlcNAc...) asparagine glycosylation occurs at N22. Sulfotyrosine occurs at positions 27 and 29. Residue N32 is glycosylated (N-linked (GlcNAc...) asparagine). The chain crosses the membrane as a helical span at residues 54–80 (AFLPALYSLLFLLGLLGNGAVAAVLLS). Residues 81-89 (RRTALSSTD) are Cytoplasmic-facing. Residues 90–110 (TFLLHLAVADTLLVLTLPLWA) traverse the membrane as a helical segment. The Extracellular portion of the chain corresponds to 111-125 (VDAAVQWVFGSGLCK). C124 and C203 are joined by a disulfide. The chain crosses the membrane as a helical span at residues 126 to 147 (VAGALFNINFYAGALLLACISF). Residues 148–169 (DRYLNIVHATQLYRRGPPARVT) lie on the Cytoplasmic side of the membrane. The helical transmembrane segment at 170-189 (LTCLAVWGLCLLFALPDFIF) threads the bilayer. Topologically, residues 190–212 (LSAHHDERLNATHCQYNFPQVGR) are extracellular. Residues 213–233 (TALRVLQLVAGFLLPLLVMAY) form a helical membrane-spanning segment. Residues 234–255 (CYAHILAVLLVSRGQRRLRAMR) are Cytoplasmic-facing. A helical transmembrane segment spans residues 256 to 277 (LVVVVVVAFALCWTPYHLVVLV). At 278 to 298 (DILMDLGALARNCGRESRVDV) the chain is on the extracellular side. Residues 299-321 (AKSVTSGLGYMHCCLNPLLYAFV) traverse the membrane as a helical segment. The Cytoplasmic segment spans residues 322–368 (GVKFRERMWMLLLRLGCPNQRGLQRQPSSSRRDSSWSETSEASYSGL). Residues 342-368 (RGLQRQPSSSRRDSSWSETSEASYSGL) are disordered. The span at 357–368 (WSETSEASYSGL) shows a compositional bias: low complexity.

Belongs to the G-protein coupled receptor 1 family. In terms of assembly, homomer. Forms heteromers with ACKR4. As to quaternary structure, interacts with PF4/CXCL4. Post-translationally, sulfation on Tyr-27 and Tyr-29 is essential for CXCL10 binding and subsequent signal transduction induction. In terms of processing, N-glycosylated. In terms of tissue distribution, isoform 1 and isoform 2 are mainly expressed in heart, kidney, liver and skeletal muscle. Isoform 1 is also expressed in placenta. Isoform 2 is expressed in endothelial cells. Expressed in T-cells (at protein level).

It localises to the cell membrane. Its function is as follows. Receptor for the C-X-C chemokine CXCL9, CXCL10 and CXCL11 and mediates the proliferation, survival and angiogenic activity of human mesangial cells (HMC) through a heterotrimeric G-protein signaling pathway. Binds to CCL21. Probably promotes cell chemotaxis response. Upon activation by PF4, induces activated T-lymphocytes migration mediated via downstream Ras/extracellular signal-regulated kinase (ERK) signaling. Receptor for the C-X-C chemokine CXCL4 and also mediates the inhibitory activities of CXCL9, CXCL10 and CXCL11 on the proliferation, survival and angiogenic activity of human microvascular endothelial cells (HMVEC) through a cAMP-mediated signaling pathway. Does not promote cell chemotaxis respons. Interaction with CXCL4 or CXCL10 leads to activation of the p38MAPK pathway and contributes to inhibition of angiogenesis. Overexpression in renal cancer cells down-regulates expression of the anti-apoptotic protein HMOX1 and promotes apoptosis. Functionally, mediates the activity of CXCL11. In Homo sapiens (Human), this protein is C-X-C chemokine receptor type 3 (CXCR3).